Reading from the N-terminus, the 424-residue chain is 3-ketoacyl-CoA thiolase A, peroxisomal (424 aa).

A peroxisome-targeting transit peptide spans 1–26 (MHRLQVVLGHLAGRPESSSALQAAPC). A PTS2-type peroxisomal targeting signal region spans residues 1-26 (MHRLQVVLGHLAGRPESSSALQAAPC). Catalysis depends on Cys123, which acts as the Acyl-thioester intermediate. Residues Lys173 and Lys234 each carry the N6-acetyllysine modification. Residues His377 and Cys408 each act as proton acceptor in the active site.

Belongs to the thiolase-like superfamily. Thiolase family. As to quaternary structure, homodimer. Interacts (via PTS2-type peroxisomal targeting signal region) with PEX7; leading to its translocation into peroxisomes. Mainly expressed in liver and intestine.

Its subcellular location is the peroxisome. The catalysed reaction is an acyl-CoA + acetyl-CoA = a 3-oxoacyl-CoA + CoA. The enzyme catalyses 2 acetyl-CoA = acetoacetyl-CoA + CoA. It catalyses the reaction tetradecanoyl-CoA + acetyl-CoA = 3-oxohexadecanoyl-CoA + CoA. It carries out the reaction hexanoyl-CoA + acetyl-CoA = 3-oxooctanoyl-CoA + CoA. The catalysed reaction is 3-oxohexadecanedioyl-CoA + CoA = tetradecanedioyl-CoA + acetyl-CoA. The enzyme catalyses 3-oxo-(6Z,9Z,12Z,15Z,18Z,21Z)-tetracosahexaenoyl-CoA + CoA = (4Z,7Z,10Z,13Z,16Z,19Z)-docosahexaenoyl-CoA + acetyl-CoA. Its pathway is lipid metabolism; peroxisomal fatty acid beta-oxidation. Functionally, responsible for the thiolytic cleavage of straight chain 3-keto fatty acyl-CoAs (3-oxoacyl-CoAs). Plays an important role in fatty acid peroxisomal beta-oxidation. Catalyzes the cleavage of short, medium, long, and very long straight chain 3-oxoacyl-CoAs. This Mus musculus (Mouse) protein is 3-ketoacyl-CoA thiolase A, peroxisomal.